A 1069-amino-acid chain; its full sequence is Leucine--tRNA ligase (1069 aa).

The tract at residues 19 to 53 is disordered; the sequence is TAEHGTGAANATASPSGAVPPSGATATAGTGDEPG. The short motif at 107–118 is the 'HIGH' region element; the sequence is PYPSGTGLHVGH. Residues 823–836 are compositionally biased toward basic and acidic residues; the sequence is GRFTHHGAPVDRRS. A disordered region spans residues 823 to 846; sequence GRFTHHGAPVDRRSGKMGKSLKNS. Positions 838–842 match the 'KMSKS' region motif; sequence KMGKS. Position 841 (K841) interacts with ATP.

Belongs to the class-I aminoacyl-tRNA synthetase family.

It localises to the cytoplasm. The enzyme catalyses tRNA(Leu) + L-leucine + ATP = L-leucyl-tRNA(Leu) + AMP + diphosphate. The sequence is that of Leucine--tRNA ligase from Frankia alni (strain DSM 45986 / CECT 9034 / ACN14a).